Consider the following 312-residue polypeptide: Homoserine O-acetyltransferase (312 aa).

C142 acts as the Acyl-thioester intermediate in catalysis. The substrate site is built by K163 and S192. The active-site Proton acceptor is the H235. E237 is a catalytic residue. Position 249 (R249) interacts with substrate.

It belongs to the MetA family.

It localises to the cytoplasm. The catalysed reaction is L-homoserine + acetyl-CoA = O-acetyl-L-homoserine + CoA. It functions in the pathway amino-acid biosynthesis; L-methionine biosynthesis via de novo pathway; O-acetyl-L-homoserine from L-homoserine: step 1/1. In terms of biological role, transfers an acetyl group from acetyl-CoA to L-homoserine, forming acetyl-L-homoserine. The chain is Homoserine O-acetyltransferase from Ruegeria pomeroyi (strain ATCC 700808 / DSM 15171 / DSS-3) (Silicibacter pomeroyi).